The following is a 126-amino-acid chain: Holo-[acyl-carrier-protein] synthase (126 aa).

2 residues coordinate Mg(2+): Asp9 and Glu58.

The protein belongs to the P-Pant transferase superfamily. AcpS family. Requires Mg(2+) as cofactor.

It is found in the cytoplasm. It carries out the reaction apo-[ACP] + CoA = holo-[ACP] + adenosine 3',5'-bisphosphate + H(+). In terms of biological role, transfers the 4'-phosphopantetheine moiety from coenzyme A to a Ser of acyl-carrier-protein. The sequence is that of Holo-[acyl-carrier-protein] synthase from Escherichia coli (strain K12 / MC4100 / BW2952).